Reading from the N-terminus, the 464-residue chain is Glutamate--tRNA ligase 1 (464 aa).

The 'HIGH' region motif lies at 8–18; the sequence is PSPTGHLHVGG. The 'KMSKS' region motif lies at 231-235; it reads PLSKR. An ATP-binding site is contributed by Lys-234.

Belongs to the class-I aminoacyl-tRNA synthetase family. Glutamate--tRNA ligase type 1 subfamily. Monomer.

It is found in the cytoplasm. It carries out the reaction tRNA(Glu) + L-glutamate + ATP = L-glutamyl-tRNA(Glu) + AMP + diphosphate. Functionally, catalyzes the attachment of glutamate to tRNA(Glu) in a two-step reaction: glutamate is first activated by ATP to form Glu-AMP and then transferred to the acceptor end of tRNA(Glu). In Thermotoga petrophila (strain ATCC BAA-488 / DSM 13995 / JCM 10881 / RKU-1), this protein is Glutamate--tRNA ligase 1.